We begin with the raw amino-acid sequence, 406 residues long: Phosphopentomutase (406 aa).

Mn(2+) contacts are provided by aspartate 10, aspartate 305, histidine 310, aspartate 346, histidine 347, and histidine 358.

Belongs to the phosphopentomutase family. The cofactor is Mn(2+).

It is found in the cytoplasm. It catalyses the reaction 2-deoxy-alpha-D-ribose 1-phosphate = 2-deoxy-D-ribose 5-phosphate. The enzyme catalyses alpha-D-ribose 1-phosphate = D-ribose 5-phosphate. Its pathway is carbohydrate degradation; 2-deoxy-D-ribose 1-phosphate degradation; D-glyceraldehyde 3-phosphate and acetaldehyde from 2-deoxy-alpha-D-ribose 1-phosphate: step 1/2. Isomerase that catalyzes the conversion of deoxy-ribose 1-phosphate (dRib-1-P) and ribose 1-phosphate (Rib-1-P) to deoxy-ribose 5-phosphate (dRib-5-P) and ribose 5-phosphate (Rib-5-P), respectively. The chain is Phosphopentomutase from Methylobacterium radiotolerans (strain ATCC 27329 / DSM 1819 / JCM 2831 / NBRC 15690 / NCIMB 10815 / 0-1).